The primary structure comprises 275 residues: Phosphonoacetaldehyde hydrolase (275 aa).

Aspartate 15 acts as the Nucleophile in catalysis. The Mg(2+) site is built by aspartate 15 and alanine 17. Lysine 56 serves as the catalytic Schiff-base intermediate with substrate. Aspartate 189 is a Mg(2+) binding site.

It belongs to the HAD-like hydrolase superfamily. PhnX family. In terms of assembly, homodimer. The cofactor is Mg(2+).

It catalyses the reaction phosphonoacetaldehyde + H2O = acetaldehyde + phosphate + H(+). Functionally, involved in phosphonate degradation. This Pseudomonas aeruginosa (strain UCBPP-PA14) protein is Phosphonoacetaldehyde hydrolase.